Here is an 873-residue protein sequence, read N- to C-terminus: Valine--tRNA ligase (873 aa).

A 'HIGH' region motif is present at residues 43–53 (PNVTGVLHMGH). Positions 532–536 (KMSKS) match the 'KMSKS' region motif. An ATP-binding site is contributed by lysine 535. The stretch at 802–873 (LGNLINVEEE…IEESIAALTK (72 aa)) forms a coiled coil.

It belongs to the class-I aminoacyl-tRNA synthetase family. ValS type 1 subfamily. Monomer.

It is found in the cytoplasm. It carries out the reaction tRNA(Val) + L-valine + ATP = L-valyl-tRNA(Val) + AMP + diphosphate. Its function is as follows. Catalyzes the attachment of valine to tRNA(Val). As ValRS can inadvertently accommodate and process structurally similar amino acids such as threonine, to avoid such errors, it has a 'posttransfer' editing activity that hydrolyzes mischarged Thr-tRNA(Val) in a tRNA-dependent manner. The chain is Valine--tRNA ligase from Parabacteroides distasonis (strain ATCC 8503 / DSM 20701 / CIP 104284 / JCM 5825 / NCTC 11152).